Consider the following 161-residue polypeptide: C-type natriuretic peptide (161 aa).

Residues 1–22 form the signal peptide; that stretch reads MFASRLAALGLLLLALVLDGKP. Positions 19–135 are disordered; the sequence is DGKPAPPPQP…GGGGSRRLKG (117 aa). The propeptide occupies 23-139; sequence APPPQPLRKA…SRRLKGLPKK (117 aa). Composition is skewed to low complexity over residues 29–60 and 76–93; these read LRKAPAGGTTALQRQLTEQQQQQQQAEGSSGP and AAPTAPKSKGAAASAASR. The span at 94–104 shows a compositional bias: basic and acidic residues; the sequence is LLRDLRPDGKQ. Over residues 120-130 the composition is skewed to gly residues; it reads GGGGGGGGGGS. Cysteine 145 and cysteine 161 are disulfide-bonded.

This sequence belongs to the natriuretic peptide family. As to expression, expressed by the venom gland.

It is found in the secreted. Functionally, snake venom natriuretic peptide that has a vasorelaxant activity in rat aortic strips and a diuretic potency in anesthetized rats. May act by activating natriuretic receptors (NPR1 and/or NPR2). The sequence is that of C-type natriuretic peptide from Rhabdophis tigrinus tigrinus (Tiger keelback snake).